The primary structure comprises 314 residues: tRNA pseudouridine synthase B (314 aa).

Aspartate 47 functions as the Nucleophile in the catalytic mechanism.

Belongs to the pseudouridine synthase TruB family. Type 1 subfamily.

It catalyses the reaction uridine(55) in tRNA = pseudouridine(55) in tRNA. Responsible for synthesis of pseudouridine from uracil-55 in the psi GC loop of transfer RNAs. This is tRNA pseudouridine synthase B from Vibrio parahaemolyticus serotype O3:K6 (strain RIMD 2210633).